Consider the following 711-residue polypeptide: MNLKLNVLTIILLPVHLLITIYSALIFIPWYFLTNAKKKNAMAKRIKAKPTSDKPGSPYRSVTHFDSLAVIDIPGADTLDKLFDHAVAKFGKKDSLGTREILSEENEMQPNGKVFKKLILGNYKWINYLEVNCRVNNFGSGLTALGLKPKNTIAIFCETRAEWMIAAQTCFKYNFPLVTLYATLGREAVVHGLNESEASYLITSVELLESKLKAALVDINCVKHIIYVDNKTINRAEYPEGLEIHSMQSVEELGAKPENLSVPPSRPTPSDMAIVMYTSGSTGRPKGVMMHHSNLIAGMTGQCERIPGLGPKDTYIGYLPLAHVLELTAEISCFTYGCRIGYSSPLTLSDQSSKIKKGSKGDCTVLKPTLMAAVPEIMDRIYKNVMSKVQEMNYVQKTLFKIGYDYKLEQIKKGYDAPLCNLILFKKVKALLGGNVRMMLSGGAPLSPQTHRFMNVCFCCPIGQGYGLTESCGAGTVTEVTDYTTGRVGAPLICCEIKLKDWQEGGYTVHDKPNPRGEIVIGGQNISMGYFKNEEKTAEDYCVDENGQRWFCTGDIGEFHPDGCLQIIDRKKDLVKLQAGEYVSLGKVEAALKNCPLIDNICAFAKSDQSYVISFVVPNQKKLTLLAQQKGVEGSWVDICNNPAMEAEILKEIREAANAMKLERFEIPIKVRLSPEPWTPETGLVTDAFKLKRKELKNHYLKDIERMYGGK.

Residues 8–28 (LTIILLPVHLLITIYSALIFI) form a helical; Signal-anchor for type III membrane protein membrane-spanning segment. Residues 29 to 711 (PWYFLTNAKK…KDIERMYGGK (683 aa)) are Cytoplasmic-facing. S447 is subject to Phosphoserine.

The protein belongs to the ATP-dependent AMP-binding enzyme family. The cofactor is Mg(2+). Abundant in steroidogenic tissues, also found in the kidney, brain and liver.

Its subcellular location is the mitochondrion outer membrane. It is found in the peroxisome membrane. It localises to the microsome membrane. The protein resides in the endoplasmic reticulum membrane. The protein localises to the cell membrane. It catalyses the reaction a long-chain fatty acid + ATP + CoA = a long-chain fatty acyl-CoA + AMP + diphosphate. The enzyme catalyses (5Z,8Z,11Z,14Z)-eicosatetraenoate + ATP + CoA = (5Z,8Z,11Z,14Z)-eicosatetraenoyl-CoA + AMP + diphosphate. It carries out the reaction 15-hydroxy-(5Z,8Z,11Z,13E)-eicosatetraenoate + ATP + CoA = 15-hydroxy-(5Z,8Z,11Z,13E)-eicosatetraenoyl-CoA + AMP + diphosphate. The catalysed reaction is 12-hydroxy-(5Z,8Z,10E,14Z)-eicosatetraenoate + ATP + CoA = 12-hydroxy-(5Z,8Z,10E,14Z)-eicosatetraenoyl-CoA + AMP + diphosphate. It catalyses the reaction 5-hydroxy-(6E,8Z,11Z,14Z)-eicosatetraenoate + ATP + CoA = 5-hydroxy-(6E,8Z,11Z,14Z)-eicosatetraenoyl-CoA + AMP + diphosphate. The enzyme catalyses 5,6-epoxy-(8Z,11Z,14Z)-eicosatrienoate + ATP + CoA = 5,6-epoxy-(8Z,11Z,14Z)-eicosatrienoyl-CoA + AMP + diphosphate. It carries out the reaction 14,15-epoxy-(5Z,8Z,11Z)-eicosatrienoate + ATP + CoA = 14,15-epoxy-(5Z,8Z,11Z)-eicosatrienoyl-CoA + AMP + diphosphate. The catalysed reaction is 11,12-epoxy-(5Z,8Z,14Z)-eicosatrienoate + ATP + CoA = 11,12-epoxy-(5Z,8Z,14Z)-eicosatrienoyl-CoA + AMP + diphosphate. It catalyses the reaction 8,9-epoxy-(5Z,11Z,14Z)-eicosatrienoate + ATP + CoA = 8,9-epoxy-(5Z,11Z,14Z)-eicosatrienoyl-CoA + AMP + diphosphate. The enzyme catalyses hexadecanoate + ATP + CoA = hexadecanoyl-CoA + AMP + diphosphate. It carries out the reaction (E)-hexadec-2-enoate + ATP + CoA = (2E)-hexadecenoyl-CoA + AMP + diphosphate. Its activity is regulated as follows. Both triacsin C and rosiglitazone inhibit arachidonoyl-CoA ligase activity. Its function is as follows. Catalyzes the conversion of long-chain fatty acids to their active form acyl-CoA for both synthesis of cellular lipids, and degradation via beta-oxidation. Preferentially activates arachidonate and eicosapentaenoate as substrates. Preferentially activates 8,9-EET &gt; 14,15-EET &gt; 5,6-EET &gt; 11,12-EET. Modulates glucose-stimulated insulin secretion by regulating the levels of unesterified EETs. Modulates prostaglandin E2 secretion. The chain is Long-chain-fatty-acid--CoA ligase 4 (Acsl4) from Mus musculus (Mouse).